Reading from the N-terminus, the 119-residue chain is Large ribosomal subunit protein bL20 (119 aa).

This sequence belongs to the bacterial ribosomal protein bL20 family.

Its function is as follows. Binds directly to 23S ribosomal RNA and is necessary for the in vitro assembly process of the 50S ribosomal subunit. It is not involved in the protein synthesizing functions of that subunit. This Clostridium tetani (strain Massachusetts / E88) protein is Large ribosomal subunit protein bL20.